The primary structure comprises 251 residues: uncharacterized protein (251 aa).

Transmembrane regions (helical) follow at residues 56 to 76 (LAVV…TLVA), 104 to 124 (IITV…FLLT), 184 to 204 (HGFV…LIIV), and 208 to 228 (YLIA…ANIS).

Its subcellular location is the membrane. This is an uncharacterized protein from Caenorhabditis elegans.